Reading from the N-terminus, the 237-residue chain is Ribonuclease PH (237 aa).

Residues Arg86 and 124–126 (GTR) each bind phosphate.

Belongs to the RNase PH family. As to quaternary structure, homohexameric ring arranged as a trimer of dimers.

The catalysed reaction is tRNA(n+1) + phosphate = tRNA(n) + a ribonucleoside 5'-diphosphate. Its function is as follows. Phosphorolytic 3'-5' exoribonuclease that plays an important role in tRNA 3'-end maturation. Removes nucleotide residues following the 3'-CCA terminus of tRNAs; can also add nucleotides to the ends of RNA molecules by using nucleoside diphosphates as substrates, but this may not be physiologically important. Probably plays a role in initiation of 16S rRNA degradation (leading to ribosome degradation) during starvation. This Dinoroseobacter shibae (strain DSM 16493 / NCIMB 14021 / DFL 12) protein is Ribonuclease PH.